A 434-amino-acid chain; its full sequence is Tryptophan dimethylallyltransferase nptA (434 aa).

Residues 91–92 (SL) and Glu-100 contribute to the L-tryptophan site. The substrate site is built by Arg-115, Lys-202, and Tyr-204. An L-tryptophan-binding site is contributed by Tyr-206. Residues Arg-271, Lys-273, Tyr-275, Tyr-358, Tyr-423, and Tyr-427 each contribute to the substrate site.

Belongs to the tryptophan dimethylallyltransferase family. Homodimer.

The catalysed reaction is L-tryptophan + dimethylallyl diphosphate = 4-(3-methylbut-2-enyl)-L-tryptophan + diphosphate. It functions in the pathway secondary metabolite biosynthesis. Nonribosomal peptide synthase involved in the synthesis of nidulanin A and derived compounds. Nidulanin A is a tetracyclopeptide with the sequence L-Phe-L-Kyn-L-Val-D-Val and an isoprene unit N-linked to the amino group of L-kynurenine. The NRPS nlsA is responsible of the synthesis of the cyclopeptide and the prenyltransferase nptA adds the isoprene unit on the L-kynurenine residue of nidulanin A. Further modifications lead to additional oxygenated related compounds. This chain is Tryptophan dimethylallyltransferase nptA, found in Emericella nidulans (strain FGSC A4 / ATCC 38163 / CBS 112.46 / NRRL 194 / M139) (Aspergillus nidulans).